The primary structure comprises 139 residues: Growth factor (139 aa).

The signal sequence occupies residues 1-19 (MSMKYLMLLFATMIIRSFA). N-linked (GlcNAc...) asparagine; by host glycosylation is present at N34. Residues 41–81 (AIRLCGPEGDGYCLHGDCIHARDINGMYCRCSHGYTGIRCQ) form the EGF-like domain. 3 disulfides stabilise this stretch: C45–C58, C53–C69, and C71–C80. An N-linked (GlcNAc...) asparagine; by host glycan is attached at N95.

Belongs to the orthopoxvirus OPG019 family.

The protein localises to the secreted. In terms of biological role, stimulates cellular proliferation (hyperplasia)and mobility around infected cells to promote rapid and efficient spread of infection. The polypeptide is Growth factor (OPG019) (Camelus).